The sequence spans 431 residues: MTWLSGLYFISIASLVFCVIGLILSGVILISRKLLVKIHPCKLKINNDDSLTKTVDSGHSLLSSLLDSGIPIPSPCGGKATCKQCKVKIVKGADQPLETDRATFSKRQLEQGWRLSCQTKVQHDMNLEIEERYLNASSWEGTVVSNDNVATFIKELVVSVSPEHPIPFKPGGYLQISVPAYKTNTSDWKQTMAPEYHSDWERFNLFNQIIDNSLLESGSANKAYSLASYPAELPVIKFNIRIATPPFINNAPSPNIPWGVCSSYIFSLKPGDKITVSGPYGESFMKENNRPLIFLIGGAGSSFGRSHILDLLLDKHSTRDITLWYGARSLKENIYQEEYEKLEKDFPNFHYHLVLSEPLAEDIASGWDKNDPEKTNFLFRAFELGQLSKLSNPEDYLYYVCGPPLHNSSILKLLDNYGVERSSIILDDFGN.

A helical transmembrane segment spans residues 10–30 (ISIASLVFCVIGLILSGVILI). The 2Fe-2S ferredoxin-type domain maps to 41-133 (CKLKINNDDS…DMNLEIEERY (93 aa)). Positions 76, 82, 85, and 117 each coordinate [2Fe-2S] cluster. Residues 136–286 (ASSWEGTVVS…SGPYGESFMK (151 aa)) form the FAD-binding FR-type domain.

The protein belongs to the NqrF family. Composed of six subunits; NqrA, NqrB, NqrC, NqrD, NqrE and NqrF. [2Fe-2S] cluster is required as a cofactor. FAD serves as cofactor.

Its subcellular location is the cell inner membrane. The enzyme catalyses a ubiquinone + n Na(+)(in) + NADH + H(+) = a ubiquinol + n Na(+)(out) + NAD(+). NQR complex catalyzes the reduction of ubiquinone-1 to ubiquinol by two successive reactions, coupled with the transport of Na(+) ions from the cytoplasm to the periplasm. The first step is catalyzed by NqrF, which accepts electrons from NADH and reduces ubiquinone-1 to ubisemiquinone by a one-electron transfer pathway. This Chlamydia felis (strain Fe/C-56) (Chlamydophila felis) protein is Na(+)-translocating NADH-quinone reductase subunit F.